Consider the following 276-residue polypeptide: Ribosomal RNA small subunit methyltransferase I (276 aa).

Belongs to the methyltransferase superfamily. RsmI family.

Its subcellular location is the cytoplasm. The enzyme catalyses cytidine(1402) in 16S rRNA + S-adenosyl-L-methionine = 2'-O-methylcytidine(1402) in 16S rRNA + S-adenosyl-L-homocysteine + H(+). Its function is as follows. Catalyzes the 2'-O-methylation of the ribose of cytidine 1402 (C1402) in 16S rRNA. This chain is Ribosomal RNA small subunit methyltransferase I, found in Mycoplasma pneumoniae (strain ATCC 29342 / M129 / Subtype 1) (Mycoplasmoides pneumoniae).